Consider the following 517-residue polypeptide: Pentatricopeptide repeat-containing protein At1g77360, mitochondrial (517 aa).

Residues 1–59 constitute a mitochondrion transit peptide; that stretch reads MKRFRIRSVDFRQLVNFFSFMRWECSSSATVWVRFNMTIRIINRQSRFCCKSFLSARLY. PPR repeat units follow at residues 133-163, 167-201, 202-232, 236-270, 271-305, 306-340, 341-375, 376-406, 410-444, and 445-479; these read SVRA…MRKK, NVET…DLPP, NLVA…MRDR, DSKT…GCHP, DIVT…ICKP, TTFI…GMKA, DVAV…GVTP, NSKS…MIKV, DADT…GVFP, and SMHT…GIRP.

Belongs to the PPR family. P subfamily.

Its subcellular location is the mitochondrion. The sequence is that of Pentatricopeptide repeat-containing protein At1g77360, mitochondrial from Arabidopsis thaliana (Mouse-ear cress).